The chain runs to 572 residues: Squalene monooxygenase (572 aa).

Over 1 to 19 the chain is Cytoplasmic; sequence MWTFLGIATFTYFYKKCGD. An interaction with MARCHF6 region spans residues 1–98; that stretch reads MWTFLGIATF…EQLESKKCRK (98 aa). Residues 20 to 40 lie within the membrane without spanning it; that stretch reads VTLANKELLLCVLVFLSLGLV. Residues 41–572 are Cytoplasmic-facing; that stretch reads LSYRCRHRHG…IYSEMKYLVH (532 aa). Positions 61 to 72 are required for degradation in response to high membrane cholesterol levels; sequence QFAAFSDILSAL. The tract at residues 116 to 572 is sufficient for enzyme activity; sequence TSFVTDPEVI…IYSEMKYLVH (457 aa). FAD contacts are provided by residues 131-132, 151-152, arginine 159, arginine 232, valine 248, aspartate 406, and methionine 419; these read VL and ER. The interval 514 to 572 is hydrophobic; mediates interaction with membranes; it reads PLVLIRHFFSVAIYATYFCFKSEPWATKPRALFSSGAVLYKACSILFPLIYSEMKYLVH.

This sequence belongs to the squalene monooxygenase family. Interacts (via N-terminal domain) with MARCHF6. Interacts with SMIM22; this interaction modulates lipid droplet formation. It depends on FAD as a cofactor. Post-translationally, ubiquitinated by MARCHF6 in response to high cholesterol levels in intracellular membranes, leading to proteasomal degradation. In terms of tissue distribution, detected in liver.

Its subcellular location is the microsome membrane. The protein resides in the endoplasmic reticulum membrane. It catalyses the reaction squalene + reduced [NADPH--hemoprotein reductase] + O2 = (S)-2,3-epoxysqualene + oxidized [NADPH--hemoprotein reductase] + H2O + H(+). The protein operates within terpene metabolism; lanosterol biosynthesis; lanosterol from farnesyl diphosphate: step 2/3. In terms of biological role, catalyzes the stereospecific oxidation of squalene to (S)-2,3-epoxysqualene, and is considered to be a rate-limiting enzyme in steroid biosynthesis. The sequence is that of Squalene monooxygenase (Sqle) from Mus musculus (Mouse).